Reading from the N-terminus, the 384-residue chain is Mannitol-1-phosphate 5-dehydrogenase (384 aa).

3 to 14 (ALHFGAGNIGRG) is an NAD(+) binding site.

This sequence belongs to the mannitol dehydrogenase family.

The catalysed reaction is D-mannitol 1-phosphate + NAD(+) = beta-D-fructose 6-phosphate + NADH + H(+). The sequence is that of Mannitol-1-phosphate 5-dehydrogenase (mtlD) from Clostridium acetobutylicum (strain ATCC 824 / DSM 792 / JCM 1419 / IAM 19013 / LMG 5710 / NBRC 13948 / NRRL B-527 / VKM B-1787 / 2291 / W).